Reading from the N-terminus, the 558-residue chain is Nuclear speckle splicing regulatory protein 1 (558 aa).

The interval 21–54 is disordered; it reads PVLQKPSVFGNDSDDDDETSVSESLQREAAKKQA. Residues serine 27 and serine 33 each carry the phosphoserine modification. Residues 104 to 170 are a coiled coil; the sequence is IHNLLKAVEI…REKRAAALEA (67 aa). Residues 106 to 170 are necessary for alternative splicing activity; the sequence is NLLKAVEIRK…REKRAAALEA (65 aa). Residues lysine 199 and lysine 210 each participate in a glycyl lysine isopeptide (Lys-Gly) (interchain with G-Cter in SUMO2) cross-link. Residues 204–215 show a composition bias toward basic and acidic residues; that stretch reads EARSGIKEEKSR. Positions 204 to 534 are disordered; it reads EARSGIKEEK…KRNNEETVMS (331 aa). Positions 216–226 are enriched in polar residues; sequence GFSNEVSSKNR. Residues serine 248, serine 254, and serine 255 each carry the phosphoserine modification. Residues 250–280 show a composition bias toward basic and acidic residues; the sequence is FDAKSSADDEIEETRVNCRREKVIETPENDF. Threonine 275 is subject to Phosphothreonine. Lysine 281 participates in a covalent cross-link: Glycyl lysine isopeptide (Lys-Gly) (interchain with G-Cter in SUMO2). Residues 299 to 310 are compositionally biased toward basic residues; it reads STRHHTKGSRTS. 3 stretches are compositionally biased toward basic and acidic residues: residues 311–442, 449–487, and 501–517; these read RGHE…KREV, RNQDRKESSPNSRAKDKFLDQERSNKMRNMAKDKERNQE, and RLTEEGQEKGKEQERPP. Residues 379–427 are a coiled coil; sequence KREKDREKYSQREQERDRQQNDQNRPSEKGEKEEKSKAKEEHMKVRKER. The residue at position 457 (serine 457) is a Phosphoserine.

It belongs to the NSRP1 family. In terms of assembly, interacts (via C-terminus) with SRSF1. Interacts (via C-terminus) with SRSF2. As to expression, expressed in dendritic cells, T-cells, B-cells and natural killer cells. Expressed in secondary lymphoid organs such as spleen and mesenteric, axillary and brachial lymph nodes.

The protein resides in the nucleus. It is found in the nucleus speckle. Its function is as follows. RNA-binding protein that mediates pre-mRNA alternative splicing regulation. The protein is Nuclear speckle splicing regulatory protein 1 (NSRP1) of Homo sapiens (Human).